The primary structure comprises 72 residues: Translation initiation factor IF-1 (72 aa).

One can recognise an S1-like domain in the interval 1 to 72; sequence MSKEENIEMQ…TKGRIIFRSR (72 aa).

This sequence belongs to the IF-1 family. Component of the 30S ribosomal translation pre-initiation complex which assembles on the 30S ribosome in the order IF-2 and IF-3, IF-1 and N-formylmethionyl-tRNA(fMet); mRNA recruitment can occur at any time during PIC assembly.

The protein resides in the cytoplasm. Its function is as follows. One of the essential components for the initiation of protein synthesis. Stabilizes the binding of IF-2 and IF-3 on the 30S subunit to which N-formylmethionyl-tRNA(fMet) subsequently binds. Helps modulate mRNA selection, yielding the 30S pre-initiation complex (PIC). Upon addition of the 50S ribosomal subunit IF-1, IF-2 and IF-3 are released leaving the mature 70S translation initiation complex. This chain is Translation initiation factor IF-1, found in Buchnera aphidicola subsp. Acyrthosiphon pisum (strain APS) (Acyrthosiphon pisum symbiotic bacterium).